Here is a 631-residue protein sequence, read N- to C-terminus: Phosphomethylpyrimidine synthase (631 aa).

Residues asparagine 239, methionine 268, tyrosine 297, histidine 333, 353 to 355 (SRG), 394 to 397 (DGLR), and glutamate 433 contribute to the substrate site. Histidine 437 provides a ligand contact to Zn(2+). Position 460 (tyrosine 460) interacts with substrate. A Zn(2+)-binding site is contributed by histidine 501. [4Fe-4S] cluster is bound by residues cysteine 581, cysteine 584, and cysteine 589.

This sequence belongs to the ThiC family. As to quaternary structure, homodimer. [4Fe-4S] cluster is required as a cofactor.

It catalyses the reaction 5-amino-1-(5-phospho-beta-D-ribosyl)imidazole + S-adenosyl-L-methionine = 4-amino-2-methyl-5-(phosphooxymethyl)pyrimidine + CO + 5'-deoxyadenosine + formate + L-methionine + 3 H(+). It functions in the pathway cofactor biosynthesis; thiamine diphosphate biosynthesis. Catalyzes the synthesis of the hydroxymethylpyrimidine phosphate (HMP-P) moiety of thiamine from aminoimidazole ribotide (AIR) in a radical S-adenosyl-L-methionine (SAM)-dependent reaction. The protein is Phosphomethylpyrimidine synthase of Escherichia coli (strain 55989 / EAEC).